The sequence spans 208 residues: Large ribosomal subunit protein uL3 (208 aa).

The interval 116 to 148 (GFQGVIKRHGQSRGPMAHGSRYHRRPGSMGPVA) is disordered.

This sequence belongs to the universal ribosomal protein uL3 family. Part of the 50S ribosomal subunit. Forms a cluster with proteins L14 and L19.

Functionally, one of the primary rRNA binding proteins, it binds directly near the 3'-end of the 23S rRNA, where it nucleates assembly of the 50S subunit. The sequence is that of Large ribosomal subunit protein uL3 from Streptococcus agalactiae serotype Ia (strain ATCC 27591 / A909 / CDC SS700).